Reading from the N-terminus, the 623-residue chain is Leucine aminopeptidase 2 (623 aa).

A peptide is bound by residues 140–142 and 266–271; these read QLE and PYGGME. His-295 serves as a coordination point for Zn(2+). Glu-296 acts as the Proton acceptor in catalysis. Zn(2+)-binding residues include His-299 and Glu-318. Tyr-382 functions as the Proton donor in the catalytic mechanism.

It belongs to the peptidase M1 family. Zn(2+) serves as cofactor.

The protein localises to the cytoplasm. The protein resides in the nucleus. It catalyses the reaction an epoxide + H2O = an ethanediol. Functionally, aminopeptidase that preferentially cleaves di- and tripeptides. Also has low epoxide hydrolase activity (in vitro). Can hydrolyze the epoxide leukotriene LTA(4) but it forms preferentially 5,6-dihydroxy-7,9,11,14-eicosatetraenoic acid rather than the cytokine leukotriene B(4) as the product compared to the homologous mammalian enzyme (in vitro). This chain is Leucine aminopeptidase 2, found in Eremothecium gossypii (strain ATCC 10895 / CBS 109.51 / FGSC 9923 / NRRL Y-1056) (Yeast).